Here is a 612-residue protein sequence, read N- to C-terminus: Rhotekin-2 (612 aa).

One can recognise an REM-1 domain in the interval 3-79; the sequence is IKRKKIRESA…LRSQMGESNT (77 aa). The 108-residue stretch at 285-392 folds into the PH domain; that stretch reads DEAMMGFLNQ…WMEAFWQHFY (108 aa). Disordered regions lie at residues 483-530 and 574-612; these read RNKP…SDKE and ENKAELDTGTQEPIKPVPTPRQKSLREKLDPRVWLQSQV. Residues 486–498 are compositionally biased toward low complexity; that stretch reads PPLLSSDDPSTSS.

This Xenopus laevis (African clawed frog) protein is Rhotekin-2 (rtkn2).